Reading from the N-terminus, the 512-residue chain is Tyrosine-protein kinase Lyn (512 aa).

Positions 1–50 (MGCIKSKRKDNLNDDGVDMKTQPVRNTDRTIYVRDPTSNKQQRPVPESQL) are disordered. The N-myristoyl glycine moiety is linked to residue glycine 2. Cysteine 3 carries the S-palmitoyl cysteine lipid modification. In terms of domain architecture, SH3 spans 63-123 (EQGDIVVALY…PSNYVAKVNT (61 aa)). An SH2 domain is found at 129-226 (WFFKDITRKD…GLCRRLEKAC (98 aa)). A Phosphotyrosine modification is found at tyrosine 193. Serine 228 carries the phosphoserine modification. Residues 247–501 (IKLVKKLGAG…YLQSVLDDFY (255 aa)) form the Protein kinase domain. Residues 253-261 (LGAGQFGEV) and lysine 275 contribute to the ATP site. Phosphotyrosine occurs at positions 306 and 316. The Proton acceptor role is filled by aspartate 367. Tyrosine 397 is modified (phosphotyrosine; by autocatalysis). A phosphotyrosine mark is found at tyrosine 460 and tyrosine 473. Position 508 is a phosphotyrosine; by autocatalysis, CSK and MATK (tyrosine 508).

Belongs to the protein kinase superfamily. Tyr protein kinase family. SRC subfamily. In terms of assembly, interacts with TEC. Interacts (via SH2 domain) with FLT3 (tyrosine phosphorylated). Interacts with LIME1 and with CD79A upon activation of the B-cell antigen receptor. Interacts with the B-cell receptor complex. Interacts with phosphorylated THEMIS2. Interacts with EPOR. Interacts with MS4A2/FCER1B. Interaction (via the SH2 and SH3 domains) with MUC1 is stimulated by IL7 and the subsequent phosphorylation increases the binding between MUC1 and CTNNB1/beta-catenin. Interacts with ADAM15. Interacts with NDFIP2 and more weakly with NDFIP1. Interacts with FASLG. Interacts with KIT. Interacts with HCLS1. Interacts with FCGR2B. Interacts with FCGR1A; the interaction may be indirect. Interacts with CD19, CD22, CD79A and CD79B. Interacts (via SH3 domain) with CBLC, PPP1R15A and PDE4A. Interacts with TGFB1I1. Interacts (via SH3 domain) with PIK3R1, the regulatory subunit of phosphatidylinositol 3-kinase; this interaction enhances phosphatidylinositol 3-kinase activity. Interacts with CSF2RB, the common subunit of the IL3, IL5 and CSF2 receptors. Interacts with PAG1; identified in a complex with PAG1 and STAT3. Interacts with ABL1. Interacts with PTPN6/SHP-1. Interacts (via SH3 domain) with SCIMP (via proline-rich region). This interaction facilitates the phosphorylation of SCIMP 'Tyr-96', which enhances binding of SCIMP to TLR4, and consequently the phosphorylation of TLR4 in response to stimulation by lipopolysaccharide in macrophages. Interacts with LPXN (via LD motif 3) and the interaction is induced upon B-cell antigen receptor (BCR) activation. Interacts (via SH3-domain) with ANKRD54 (via ankyrin repeat region) in an activation-independent status of LYN. Forms a multiprotein complex with ANKRD54 and HCLS1. Interacts (via SH2 and SH3 domains) with UNC119; leading to LYN activation. Interacts with CD36. Interacts with LYN. Interacts with SKAP1 and FYB1; this interaction promotes the phosphorylation of CLNK. Interacts with BCAR1/CAS and NEDD9/HEF1. In terms of processing, ubiquitinated. Ubiquitination is SH3-dependent. Post-translationally, autophosphorylated. Phosphorylated on tyrosine residues in response to KIT signaling. Phosphorylation at Tyr-397 is required for optimal activity. Phosphorylation at Tyr-508 inhibits kinase activity. Phosphorylated at Tyr-508 by CSK. Dephosphorylated by PTPRC/CD45. Becomes rapidly phosphorylated upon activation of the B-cell receptor and the immunoglobulin receptor FCGR1A. Phosphorylated in response to integrin ITGB1 in B-cells. Detected in spleen (at protein level). Expressed predominantly in B-lymphoid and myeloid cells.

Its subcellular location is the cell membrane. It localises to the nucleus. The protein resides in the cytoplasm. It is found in the perinuclear region. The protein localises to the golgi apparatus. Its subcellular location is the membrane. The enzyme catalyses L-tyrosyl-[protein] + ATP = O-phospho-L-tyrosyl-[protein] + ADP + H(+). Its activity is regulated as follows. Subject to autoinhibition, mediated by intramolecular interactions between the SH2 domain and the C-terminal phosphotyrosine. Phosphorylation at Tyr-397 is required for optimal activity. Phosphorylated by CSK at Tyr-508; phosphorylation at Tyr-508 inhibits kinase activity. Kinase activity is modulated by dephosphorylation by PTPRC/CD45. Functionally, non-receptor tyrosine-protein kinase that transmits signals from cell surface receptors and plays an important role in the regulation of innate and adaptive immune responses, hematopoiesis, responses to growth factors and cytokines, integrin signaling, but also responses to DNA damage and genotoxic agents. Functions primarily as negative regulator, but can also function as activator, depending on the context. Required for the initiation of the B-cell response, but also for its down-regulation and termination. Plays an important role in the regulation of B-cell differentiation, proliferation, survival and apoptosis, and is important for immune self-tolerance. Acts downstream of several immune receptors, including the B-cell receptor, CD79A, CD79B, CD5, CD19, CD22, FCER1, FCGR2, FCGR1A, TLR2 and TLR4. Plays a role in the inflammatory response to bacterial lipopolysaccharide. Mediates the responses to cytokines and growth factors in hematopoietic progenitors, platelets, erythrocytes, and in mature myeloid cells, such as dendritic cells, neutrophils and eosinophils. Acts downstream of EPOR, KIT, MPL, the chemokine receptor CXCR4, as well as the receptors for IL3, IL5 and CSF2. Plays an important role in integrin signaling. Regulates cell proliferation, survival, differentiation, migration, adhesion, degranulation, and cytokine release. Involved in the regulation of endothelial activation, neutrophil adhesion and transendothelial migration. Down-regulates signaling pathways by phosphorylation of immunoreceptor tyrosine-based inhibitory motifs (ITIM), that then serve as binding sites for phosphatases, such as PTPN6/SHP-1, PTPN11/SHP-2 and INPP5D/SHIP-1, that modulate signaling by dephosphorylation of kinases and their substrates. Phosphorylates LIME1 in response to CD22 activation. Phosphorylates BTK, CBL, CD5, CD19, CD72, CD79A, CD79B, CSF2RB, DOK1, HCLS1, LILRB3/PIR-B, MS4A2/FCER1B, SYK and TEC. Promotes phosphorylation of SIRPA, PTPN6/SHP-1, PTPN11/SHP-2 and INPP5D/SHIP-1. Required for rapid phosphorylation of FER in response to FCER1 activation. Mediates KIT phosphorylation. Acts as an effector of EPOR (erythropoietin receptor) in controlling KIT expression and may play a role in erythroid differentiation during the switch between proliferation and maturation. Depending on the context, activates or inhibits several signaling cascades. Regulates phosphatidylinositol 3-kinase activity and AKT1 activation. Regulates activation of the MAP kinase signaling cascade, including activation of MAP2K1/MEK1, MAPK1/ERK2, MAPK3/ERK1, MAPK8/JNK1 and MAPK9/JNK2. Mediates activation of STAT5A and/or STAT5B. Phosphorylates LPXN on 'Tyr-72'. Kinase activity facilitates TLR4-TLR6 heterodimerization and signal initiation. Phosphorylates SCIMP on 'Tyr-96'; this enhances binding of SCIMP to TLR4, promoting the phosphorylation of TLR4, and a selective cytokine response to lipopolysaccharide in macrophages. Phosphorylates CLNK. Phosphorylates BCAR1/CAS and NEDD9/HEF1. This Rattus norvegicus (Rat) protein is Tyrosine-protein kinase Lyn (Lyn).